A 307-amino-acid chain; its full sequence is Probable rRNA-processing protein EBP2 homolog (307 aa).

3 disordered regions span residues 1 to 22 (MSDF…SDAE), 189 to 208 (QRKM…EAEK), and 236 to 307 (ESKQ…KGRK). The stretch at 205-252 (EAEKKDMLDKLKKFRKGKLKNLDFLEDAKALESKQKQSAENRKKRNKK) forms a coiled coil. The span at 236–245 (ESKQKQSAEN) shows a compositional bias: basic and acidic residues. Basic residues-rich tracts occupy residues 246-266 (RKKR…KRNT) and 294-307 (RLGK…KGRK).

This sequence belongs to the EBP2 family.

It localises to the nucleus. Its subcellular location is the nucleolus. In terms of biological role, required for the processing of the 27S pre-rRNA. This is Probable rRNA-processing protein EBP2 homolog from Drosophila melanogaster (Fruit fly).